A 1122-amino-acid chain; its full sequence is AP-4 complex subunit epsilon-1 (1122 aa).

Ser699 bears the Phosphoserine mark. 2 stretches are compositionally biased toward basic and acidic residues: residues 714-728 (YLPK…KPEA) and 745-760 (TTRK…STEE). 2 disordered regions span residues 714 to 760 (YLPK…STEE) and 797 to 861 (SKLK…AEKL). Positions 726–1122 (PEASHVPAEG…CHCQKVMQTS (397 aa)) are interaction with TEPSIN. Over residues 841-853 (ELSSELFRSESLS) the composition is skewed to low complexity. Ser851 bears the Phosphoserine mark.

This sequence belongs to the adaptor complexes large subunit family. Adaptor protein complex 4 (AP-4) is a heterotetramer composed of two large adaptins (epsilon-type subunit AP4E1 and beta-type subunit AP4B1), a medium adaptin (mu-type subunit AP4M1) and a small adaptin (sigma-type AP4S1). Interacts with TEPSIN. Interacts with GRIA2; probably indirect it mediates the somatodendritic localization of GRIA2 in neurons.

It localises to the golgi apparatus. The protein resides in the trans-Golgi network membrane. Functionally, component of the adaptor protein complex 4 (AP-4). Adaptor protein complexes are vesicle coat components involved both in vesicle formation and cargo selection. They control the vesicular transport of proteins in different trafficking pathways. AP-4 forms a non clathrin-associated coat on vesicles departing the trans-Golgi network (TGN) and may be involved in the targeting of proteins from the trans-Golgi network (TGN) to the endosomal-lysosomal system. It is also involved in protein sorting to the basolateral membrane in epithelial cells and the proper asymmetric localization of somatodendritic proteins in neurons. AP-4 is involved in the recognition and binding of tyrosine-based sorting signals found in the cytoplasmic part of cargos, but may also recognize other types of sorting signal. The protein is AP-4 complex subunit epsilon-1 of Mus musculus (Mouse).